We begin with the raw amino-acid sequence, 365 residues long: UDP-N-acetylglucosamine--N-acetylmuramyl-(pentapeptide) pyrophosphoryl-undecaprenol N-acetylglucosamine transferase (365 aa).

Residues 10–12, asparagine 124, arginine 161, serine 195, isoleucine 248, and glutamine 292 contribute to the UDP-N-acetyl-alpha-D-glucosamine site; that span reads TAG.

This sequence belongs to the glycosyltransferase 28 family. MurG subfamily.

Its subcellular location is the cell membrane. It carries out the reaction di-trans,octa-cis-undecaprenyl diphospho-N-acetyl-alpha-D-muramoyl-L-alanyl-D-glutamyl-meso-2,6-diaminopimeloyl-D-alanyl-D-alanine + UDP-N-acetyl-alpha-D-glucosamine = di-trans,octa-cis-undecaprenyl diphospho-[N-acetyl-alpha-D-glucosaminyl-(1-&gt;4)]-N-acetyl-alpha-D-muramoyl-L-alanyl-D-glutamyl-meso-2,6-diaminopimeloyl-D-alanyl-D-alanine + UDP + H(+). The protein operates within cell wall biogenesis; peptidoglycan biosynthesis. Cell wall formation. Catalyzes the transfer of a GlcNAc subunit on undecaprenyl-pyrophosphoryl-MurNAc-pentapeptide (lipid intermediate I) to form undecaprenyl-pyrophosphoryl-MurNAc-(pentapeptide)GlcNAc (lipid intermediate II). This Nocardioides sp. (strain ATCC BAA-499 / JS614) protein is UDP-N-acetylglucosamine--N-acetylmuramyl-(pentapeptide) pyrophosphoryl-undecaprenol N-acetylglucosamine transferase.